The following is a 285-amino-acid chain: HTH-type transcriptional regulator MurR (285 aa).

The HTH rpiR-type domain maps to 1 to 77 (MLYLTKIRNA…MALIGEYSAS (77 aa)). Residues 37 to 56 (SRKMAKQLGISQSSIVKFAQ) constitute a DNA-binding region (H-T-H motif). Positions 128–268 (IIEVISKAPF…FVGLVQLNDV (141 aa)) constitute an SIS domain.

In terms of assembly, homotetramer.

It functions in the pathway amino-sugar metabolism; N-acetylmuramate degradation [regulation]. Represses the expression of the murPQ operon involved in the uptake and degradation of N-acetylmuramic acid (MurNAc). Binds to two adjacent inverted repeats within the operator region. MurNAc 6-phosphate, the substrate of MurQ, is the specific inducer that weakens binding of MurR to the operator. The protein is HTH-type transcriptional regulator MurR of Escherichia coli O9:H4 (strain HS).